The following is a 488-amino-acid chain: Kelch-like protein 15 (488 aa).

Positions 31-98 constitute a BTB domain; that stretch reads LDVTLVIEDH…MYYGTIELSM (68 aa). Residues 133-237 enclose the BACK domain; it reads CAEIMRLLDD…TPSSVFEKVK (105 aa). 3 Kelch repeats span residues 328-379, 381-426, and 428-473; these read FVFL…VIGR, VYAV…VLGN, and LYIT…NKCK.

In terms of assembly, homodimer. Interacts with CUL3.

It is found in the nucleus. It functions in the pathway protein modification; protein ubiquitination. In terms of biological role, substrate-specific adapter for CUL3 E3 ubiquitin-protein ligase complex. This chain is Kelch-like protein 15 (KLHL15), found in Gallus gallus (Chicken).